The following is a 367-amino-acid chain: Pectate lyase 1 (367 aa).

The N-terminal stretch at 1–21 is a signal peptide; that stretch reads MASPCLVAVLVFLCAIVSCYS. 2 cysteine pairs are disulfide-bonded: cysteine 28–cysteine 45 and cysteine 128–cysteine 147. N-linked (GlcNAc...) asparagine glycosylation is present at asparagine 148. Aspartate 170 serves as a coordination point for Ca(2+). Residue asparagine 178 is glycosylated (N-linked (GlcNAc...) asparagine). Ca(2+) contacts are provided by aspartate 194 and aspartate 198. Residue arginine 250 is part of the active site. N-linked (GlcNAc...) asparagine glycosylation occurs at asparagine 293. Residues cysteine 306 and cysteine 312 are joined by a disulfide bond.

Belongs to the polysaccharide lyase 1 family. Amb a subfamily. Ca(2+) is required as a cofactor.

It carries out the reaction Eliminative cleavage of (1-&gt;4)-alpha-D-galacturonan to give oligosaccharides with 4-deoxy-alpha-D-galact-4-enuronosyl groups at their non-reducing ends.. It participates in glycan metabolism; pectin degradation; 2-dehydro-3-deoxy-D-gluconate from pectin: step 2/5. Has pectate lyase activity. The protein is Pectate lyase 1 of Hesperocyparis arizonica (Arizona cypress).